Consider the following 474-residue polypeptide: tRNA-2-methylthio-N(6)-dimethylallyladenosine synthase (474 aa).

One can recognise an MTTase N-terminal domain in the interval 3–120; that stretch reads KKLHIKTWGC…LPDMIEQVRR (118 aa). [4Fe-4S] cluster contacts are provided by C12, C49, C83, C157, C161, and C164. The region spanning 143–375 is the Radical SAM core domain; the sequence is RAEGPTAFVS…QDRITQQAMR (233 aa). Residues 378-441 form the TRAM domain; that stretch reads RHMMGTVQRI…TNSLRGKFIR (64 aa).

Belongs to the methylthiotransferase family. MiaB subfamily. Monomer. The cofactor is [4Fe-4S] cluster.

The protein localises to the cytoplasm. It carries out the reaction N(6)-dimethylallyladenosine(37) in tRNA + (sulfur carrier)-SH + AH2 + 2 S-adenosyl-L-methionine = 2-methylsulfanyl-N(6)-dimethylallyladenosine(37) in tRNA + (sulfur carrier)-H + 5'-deoxyadenosine + L-methionine + A + S-adenosyl-L-homocysteine + 2 H(+). Catalyzes the methylthiolation of N6-(dimethylallyl)adenosine (i(6)A), leading to the formation of 2-methylthio-N6-(dimethylallyl)adenosine (ms(2)i(6)A) at position 37 in tRNAs that read codons beginning with uridine. The polypeptide is tRNA-2-methylthio-N(6)-dimethylallyladenosine synthase (Shewanella sp. (strain MR-7)).